The following is a 126-amino-acid chain: Small ribosomal subunit protein uS12c (126 aa).

The protein belongs to the universal ribosomal protein uS12 family. Part of the 30S ribosomal subunit.

Its subcellular location is the plastid. It is found in the chloroplast. Functionally, with S4 and S5 plays an important role in translational accuracy. Located at the interface of the 30S and 50S subunits. This Trieres chinensis (Marine centric diatom) protein is Small ribosomal subunit protein uS12c (rps12).